We begin with the raw amino-acid sequence, 89 residues long: MATAVAAKEEPATRFAKDQLKAIIERIERLEEEKKTLSDDIRDVYAEAKGNGYDVKALRTIVRMRKQDANERAEQETILETYMQALGML.

The protein belongs to the UPF0335 family.

In Nitrobacter hamburgensis (strain DSM 10229 / NCIMB 13809 / X14), this protein is UPF0335 protein Nham_1221.